The chain runs to 240 residues: Uridylate kinase (240 aa).

13 to 16 is a binding site for ATP; the sequence is KASG. The segment at 21-26 is involved in allosteric activation by GTP; the sequence is GSQGFG. Position 55 (Gly55) interacts with UMP. Positions 56 and 60 each coordinate ATP. Residues Asp75 and 136–143 contribute to the UMP site; that span reads TGNPFFTT. ATP-binding residues include Thr163, Gln164, Tyr169, and Asp172.

It belongs to the UMP kinase family. Homohexamer.

The protein resides in the cytoplasm. The enzyme catalyses UMP + ATP = UDP + ADP. It participates in pyrimidine metabolism; CTP biosynthesis via de novo pathway; UDP from UMP (UMPK route): step 1/1. Allosterically activated by GTP. Inhibited by UTP. Functionally, catalyzes the reversible phosphorylation of UMP to UDP. In Brucella abortus biovar 1 (strain 9-941), this protein is Uridylate kinase.